A 321-amino-acid polypeptide reads, in one-letter code: PI-PLC X domain-containing protein 3 (321 aa).

The PI-PLC X-box domain maps to 22-197 (SIHSIPLTNL…DYQVLVFYHS (176 aa)). Catalysis depends on residues His37 and His114.

The sequence is that of PI-PLC X domain-containing protein 3 (PLCXD3) from Bos taurus (Bovine).